Here is a 182-residue protein sequence, read N- to C-terminus: Small ribosomal subunit protein uS4c (182 aa).

An S4 RNA-binding domain is found at 82-143 (MRLDNILFRL…KERSKVLIQN (62 aa)).

This sequence belongs to the universal ribosomal protein uS4 family. In terms of assembly, part of the 30S ribosomal subunit. Contacts protein S5. The interaction surface between S4 and S5 is involved in control of translational fidelity.

It is found in the plastid. It localises to the chloroplast. In terms of biological role, one of the primary rRNA binding proteins, it binds directly to 16S rRNA where it nucleates assembly of the body of the 30S subunit. Functionally, with S5 and S12 plays an important role in translational accuracy. This Alophia veracruzana (Mexican pine woods lily) protein is Small ribosomal subunit protein uS4c (rps4).